We begin with the raw amino-acid sequence, 547 residues long: Chaperonin GroEL (547 aa).

ATP-binding positions include 30–33, lysine 51, 87–91, glycine 415, 480–482, and aspartate 496; these read TLGP, DGTTT, and NAA. Positions 525 to 547 are disordered; that stretch reads KPDDKPAMPPMGGGMGGMGGMDF. A compositionally biased stretch (gly residues) spans 535–547; it reads MGGGMGGMGGMDF.

The protein belongs to the chaperonin (HSP60) family. In terms of assembly, forms a cylinder of 14 subunits composed of two heptameric rings stacked back-to-back. Interacts with the co-chaperonin GroES.

It is found in the cytoplasm. The catalysed reaction is ATP + H2O + a folded polypeptide = ADP + phosphate + an unfolded polypeptide.. Together with its co-chaperonin GroES, plays an essential role in assisting protein folding. The GroEL-GroES system forms a nano-cage that allows encapsulation of the non-native substrate proteins and provides a physical environment optimized to promote and accelerate protein folding. The protein is Chaperonin GroEL of Novosphingobium aromaticivorans (strain ATCC 700278 / DSM 12444 / CCUG 56034 / CIP 105152 / NBRC 16084 / F199).